A 517-amino-acid chain; its full sequence is Nuclear receptor subfamily 5 group A member 2 (517 aa).

The segment at residues D43–A118 is a DNA-binding region (nuclear receptor). Zn(2+) contacts are provided by C46, C49, C63, C66, C82, C88, C98, and C101. 2 consecutive NR C4-type zinc fingers follow at residues C46–C66 and C82–C101. The tract at residues K112–K127 is C-terminal extension (CTE). The FTZ-F1 box motif lies at F128–R147. The disordered stretch occupies residues G182–D211. Residues S186–S199 are compositionally biased toward basic residues. The NR LBD domain maps to S276 to K515. Residues G397 to L400, Y492, and K496 contribute to the a phospholipid derivative site. The AF-2 stretch occupies residues C504 to K515.

This sequence belongs to the nuclear hormone receptor family. NR5 subfamily. Monomer; Binds DNA as a monomer.

The protein localises to the nucleus. Its subcellular location is the chromosome. Orphan nuclear receptor that binds DNA as a monomer to the 5'-TCAAGGCCA-3' sequence and controls expression of target genes: regulates key biological processes, such as cholesterol and bile acid synthesis pathways, as well as cartilage, liver and pancreas morphogenesis. Ligand-binding causes conformational change which causes recruitment of coactivators, promoting target gene activation. The specific ligand is unknown, but specific phospholipids, such as phosphatidylethanolamine, phosphatidylserine, dilauroyl phosphatidylcholine and diundecanoyl phosphatidylcholine can act as ligand in vitro. Acts as a pioneer transcription factor, which unwraps target DNA from histones and elicits local opening of closed chromatin. Involved in the formation of connective tissue in lower jaw. In terms of biological role, lacks transcription factor activity; unable to activate expression of target genes. The protein is Nuclear receptor subfamily 5 group A member 2 of Danio rerio (Zebrafish).